The chain runs to 132 residues: Intraflagellar transport protein 20 homolog B (132 aa).

Residues 87–112 are a coiled coil; the sequence is EAQQQQLYALIAEKKMQLERYRIEYD.

It is found in the golgi apparatus. Its subcellular location is the cis-Golgi network. The protein resides in the cytoplasm. The protein localises to the cytoskeleton. It localises to the microtubule organizing center. It is found in the centrosome. Its subcellular location is the centriole. The protein resides in the cell projection. The protein localises to the cilium. Involved in ciliary process assembly. May play a role in the trafficking of ciliary membrane proteins from the Golgi complex to the cilium. Regulates the platelet-derived growth factor receptor-alpha (PDGFRA) signaling pathway. Plays an important role in spermatogenesis, particularly spermiogenesis, when germ cells form flagella. This is Intraflagellar transport protein 20 homolog B (ift20-b) from Xenopus laevis (African clawed frog).